The following is a 251-amino-acid chain: Hydroxyacylglutathione hydrolase (251 aa).

Zn(2+) is bound by residues His-53, His-55, Asp-57, His-58, His-110, Asp-127, and His-165.

It belongs to the metallo-beta-lactamase superfamily. Glyoxalase II family. In terms of assembly, monomer. Requires Zn(2+) as cofactor.

It catalyses the reaction an S-(2-hydroxyacyl)glutathione + H2O = a 2-hydroxy carboxylate + glutathione + H(+). It functions in the pathway secondary metabolite metabolism; methylglyoxal degradation; (R)-lactate from methylglyoxal: step 2/2. Thiolesterase that catalyzes the hydrolysis of S-D-lactoyl-glutathione to form glutathione and D-lactic acid. The protein is Hydroxyacylglutathione hydrolase of Shigella boydii serotype 4 (strain Sb227).